A 589-amino-acid polypeptide reads, in one-letter code: Intermediate filament protein ifb-1 (589 aa).

The interval Met1–Gly42 is disordered. The head stretch occupies residues Ser8–Thr84. The span at Tyr14 to Gln30 shows a compositional bias: polar residues. One can recognise an IF rod domain in the interval Glu81–Val433. A coil 1A region spans residues Leu85–Leu116. The interval Arg117–Lys130 is linker 1. The coil 1B stretch occupies residues Tyr131–Leu268. The tract at residues Gln269–Asn285 is linker 12. Residues Glu286–Val433 are coil 2. The interval Gly434–Gly588 is tail. Residues Lys444–Phe470 are disordered. An LTD domain is found at Thr466–Thr584.

The protein belongs to the intermediate filament family. In terms of assembly, forms some heteromeric filaments with ifa-1, ifa-2, ifa-3 and probably ifa-4. Expressed in epidermal cells. Expressed in amphid sensory neurons, the excretory cells, the vulva, the uterus, the rectum and some neurons of the tail. Isoform a and isoform b display a similar pattern of expression. Isoform a is predominant in pharyngeal tonofilaments.

It is found in the cytoplasm. Cytoplasmic intermediate filaments provide mechanical strength to cells. Essential protein, involved in attachment structures in epidermal cells that connect muscles to the external cuticle. Required in morphogenesis and epidermal integrity. Probable component of embryonic epidermal attachment structures. Functions in larval muscle attachment independently of ifa-2. The polypeptide is Intermediate filament protein ifb-1 (ifb-1) (Caenorhabditis elegans).